An 865-amino-acid chain; its full sequence is LINE-1 type transposase domain-containing protein 1 (865 aa).

Ser2 is subject to N-acetylserine. The residue at position 2 (Ser2) is a Phosphoserine. Thr149 carries the post-translational modification Phosphothreonine. Ser154 bears the Phosphoserine mark. Residues 370 to 508 (EMKNLETQEE…EKKASRRQKE (139 aa)) are disordered. Acidic residues-rich tracts occupy residues 376 to 440 (TQEE…EQTS) and 472 to 483 (SVEDSESEEEEE). A phosphoserine mark is found at Ser472, Ser476, and Ser478. The segment covering 498–508 (TEKKASRRQKE) has biased composition (basic and acidic residues). 3 positions are modified to phosphoserine: Ser518, Ser561, and Ser573. Residues 590–608 (EEKKHRTLHTEELTSKEAD) show a composition bias toward basic and acidic residues. The disordered stretch occupies residues 590–612 (EEKKHRTLHTEELTSKEADLTEE). Phosphoserine is present on residues Ser640, Ser648, and Ser665. Positions 642 to 684 (VLEIENSVDDLSSRMDILEERIDSLEDQIEEFSKDTMQMTKQI) form a coiled coil.

This sequence belongs to the transposase 22 family.

This chain is LINE-1 type transposase domain-containing protein 1 (L1TD1), found in Homo sapiens (Human).